The following is a 674-amino-acid chain: Pre-mRNA-splicing factor cwf4 (674 aa).

HAT repeat units follow at residues 50–82 (EFQG…WELD), 84–116 (KEFA…CEMK), 118–150 (RNIN…MEEM), 152–183 (GNIT…MERR), 185–216 (HENE…FEEE), 218–253 (GNAA…FEIR), 255–289 (KEYE…FEKQ), 299–331 (TVLD…LEES), 333–367 (GDIN…IWLN), 377–413 (KDVD…FELR), 415–446 (RKID…FEDA), 448–480 (KQFD…LETK), 482–516 (GDSD…FEFE), 518–549 (MEYG…FEIA), 567–608 (TAVV…MHGT), and 610–643 (DTRK…YLFP).

This sequence belongs to the crooked-neck family. As to quaternary structure, belongs to the 40S cdc5-associated complex (or cwf complex), a spliceosome sub-complex reminiscent of a late-stage spliceosome composed of the U2, U5 and U6 snRNAs and at least brr2, cdc5, cwf2/prp3, cwf3/syf1, cwf4/syf3, cwf5/ecm2, spp42/cwf6, cwf7/spf27, cwf8, cwf9, cwf10, cwf11, cwf12, prp45/cwf13, cwf14, cwf15, cwf16, cwf17, cwf18, cwf19, cwf20, cwf21, cwf22, cwf23, cwf24, cwf25, cwf26, cyp7/cwf27, cwf28, cwf29/ist3, lea1, msl1, prp5/cwf1, prp10, prp12/sap130, prp17, prp22, sap61, sap62, sap114, sap145, slu7, smb1, smd1, smd3, smf1, smg1 and syf2.

The protein resides in the nucleus. In terms of biological role, involved in pre-mRNA splicing and cell cycle progression. Required for the spliceosome assembly and initiation of the DNA replication. This is Pre-mRNA-splicing factor cwf4 (cwf4) from Schizosaccharomyces pombe (strain 972 / ATCC 24843) (Fission yeast).